Here is a 133-residue protein sequence, read N- to C-terminus: ATP synthase epsilon chain, chloroplastic (133 aa).

This sequence belongs to the ATPase epsilon chain family. F-type ATPases have 2 components, CF(1) - the catalytic core - and CF(0) - the membrane proton channel. CF(1) has five subunits: alpha(3), beta(3), gamma(1), delta(1), epsilon(1). CF(0) has three main subunits: a, b and c.

The protein resides in the plastid. The protein localises to the chloroplast thylakoid membrane. In terms of biological role, produces ATP from ADP in the presence of a proton gradient across the membrane. The protein is ATP synthase epsilon chain, chloroplastic of Eucalyptus globulus subsp. globulus (Tasmanian blue gum).